A 348-amino-acid chain; its full sequence is MSDRLTLLRPDDWHIHLRDGAALPHTVADVARTFGRAIIMPNLVPPVRNAEQADAYRQRILAARPAGSRFEPLMVLYLTDRTQPEEIREAKASGFVHAAKLYPAGATTNSDSGVTSIDKILPAIEAMAEVGMPLLIHGEVTRGDVDVFDREKIFIDEHMRRVVELFPTLKVVFEHITTADAVQFVTEASANVGATITAHHLLYNRNHMLVGGIRPHFYCLPILKRNTHQVALLDAATSGNPKFFLGTDSAPHAQHAKEAACGCAGCYTAFAAIELYAEAFEQRNALDKLEGFASINGPRFYGLPANTDRITLVREDWTAPASLPFGELTVIPLRAGETLRWRLLEESK.

Zn(2+) is bound by residues His14 and His16. Residues 16-18 and Asn42 contribute to the substrate site; that span reads HLR. Zn(2+) is bound by residues Lys100, His137, and His175. N6-carboxylysine is present on Lys100. Residue His137 participates in substrate binding. Leu220 serves as a coordination point for substrate. Asp248 lines the Zn(2+) pocket. Asp248 is a catalytic residue. Substrate-binding residues include His252 and Ala264.

Belongs to the metallo-dependent hydrolases superfamily. DHOase family. Class II DHOase subfamily. Homodimer. Requires Zn(2+) as cofactor.

The enzyme catalyses (S)-dihydroorotate + H2O = N-carbamoyl-L-aspartate + H(+). It participates in pyrimidine metabolism; UMP biosynthesis via de novo pathway; (S)-dihydroorotate from bicarbonate: step 3/3. Functionally, catalyzes the reversible cyclization of carbamoyl aspartate to dihydroorotate. This Pseudomonas fluorescens (strain SBW25) protein is Dihydroorotase.